Reading from the N-terminus, the 332-residue chain is ADP-L-glycero-D-manno-heptose-6-epimerase (332 aa).

NADP(+) contacts are provided by residues 10–11, 31–32, K38, 74–78, and N91; these read FI, DD, and QGACS. Residue Y138 is the Proton acceptor of the active site. NADP(+) is bound at residue K142. N167 contacts substrate. NADP(+) contacts are provided by V168 and K176. K176 serves as the catalytic Proton acceptor. Substrate contacts are provided by residues R178, H185, 199 to 202, R212, and Y291; that span reads FSGW.

The protein belongs to the NAD(P)-dependent epimerase/dehydratase family. HldD subfamily. Homopentamer. It depends on NADP(+) as a cofactor.

It carries out the reaction ADP-D-glycero-beta-D-manno-heptose = ADP-L-glycero-beta-D-manno-heptose. Its pathway is nucleotide-sugar biosynthesis; ADP-L-glycero-beta-D-manno-heptose biosynthesis; ADP-L-glycero-beta-D-manno-heptose from D-glycero-beta-D-manno-heptose 7-phosphate: step 4/4. Catalyzes the interconversion between ADP-D-glycero-beta-D-manno-heptose and ADP-L-glycero-beta-D-manno-heptose via an epimerization at carbon 6 of the heptose. The polypeptide is ADP-L-glycero-D-manno-heptose-6-epimerase (Bordetella avium (strain 197N)).